The following is a 328-amino-acid chain: MNKIKITPSVPTHMEVEKIKENAIRLHVYPYESGYAISVAHPLRRLLLSSTAGYAPIGLKIEGVQHEFDSVRGMLEDVAAFIINLKNVRFKLRDSEQENVTLEYEFSGPKELFGKDFENDLVEVVTPDAFLATLNEDAELKMSIIVQKGIGYVPSEMIRDLLPQGYIPLDAFFTPVKKAVYEIEKVLVEDNPNYEKIVFDIETDGQVDPVSALKMAMNVMQSQMEIFTNDIEVTETVGQNIENSEIFYQPLDILDLSARSYNCLDKAGIKYVGELLLMSNEALKSIKNLGKKSLDEIQEKLSELNIDLGKLSDQEKETILKKIEQNKS.

The interval 1–230 (MNKIKITPSV…QSQMEIFTND (230 aa)) is alpha N-terminal domain (alpha-NTD). The interval 243 to 328 (NSEIFYQPLD…ILKKIEQNKS (86 aa)) is alpha C-terminal domain (alpha-CTD).

Belongs to the RNA polymerase alpha chain family. As to quaternary structure, homodimer. The RNAP catalytic core consists of 2 alpha, 1 beta, 1 beta' and 1 omega subunit. When a sigma factor is associated with the core the holoenzyme is formed, which can initiate transcription.

The enzyme catalyses RNA(n) + a ribonucleoside 5'-triphosphate = RNA(n+1) + diphosphate. Its function is as follows. DNA-dependent RNA polymerase catalyzes the transcription of DNA into RNA using the four ribonucleoside triphosphates as substrates. This is DNA-directed RNA polymerase subunit alpha from Nitratiruptor sp. (strain SB155-2).